Consider the following 455-residue polypeptide: MWGGRFSAKPAELMQAINVSIGFDKRLWAQDLAGSRAHARMLMNQGVIASHDGEEILEGLARVEDELLSGTFPFRDEYEDIHMNIEARLRELIGPTAGRLHTARSRNDQVAVDFRLWVRDACDRTVGQLEALQKALLTQAEAHAESLMPGFTHLQPAQPVTFGHHLMAYVEMFGRDAGRFRDARARMNECPLGAAALAGSPFPIDRQQTASALGFDRPTANSLDSVSSRDFALEALSAASITATHLSRLAEEIVLWTTPMFGFIKLTDAFTTGSSIMPQKKNPDAAELIRAKVGRILGSLTTLTVVMKGLPLAYSKDMQEDKVPTFEAFDALELSLLAMAGMIADLTPNTENMAKAAGAGFSTATDLADWLVRTLNMPFRDAHHVTGSAVKTAEGLGVDLADLSLAQFQAIEPQITKEVYAVLTPAASAASRMSYGGTAPAQVRAQIARWKELLA.

The protein belongs to the lyase 1 family. Argininosuccinate lyase subfamily.

Its subcellular location is the cytoplasm. It carries out the reaction 2-(N(omega)-L-arginino)succinate = fumarate + L-arginine. The protein operates within amino-acid biosynthesis; L-arginine biosynthesis; L-arginine from L-ornithine and carbamoyl phosphate: step 3/3. The sequence is that of Argininosuccinate lyase from Caulobacter vibrioides (strain ATCC 19089 / CIP 103742 / CB 15) (Caulobacter crescentus).